Here is a 118-residue protein sequence, read N- to C-terminus: Holo-[acyl-carrier-protein] synthase (118 aa).

Mg(2+) contacts are provided by Asp5 and Glu50.

It belongs to the P-Pant transferase superfamily. AcpS family. The cofactor is Mg(2+).

It is found in the cytoplasm. It catalyses the reaction apo-[ACP] + CoA = holo-[ACP] + adenosine 3',5'-bisphosphate + H(+). Functionally, transfers the 4'-phosphopantetheine moiety from coenzyme A to a Ser of acyl-carrier-protein. The polypeptide is Holo-[acyl-carrier-protein] synthase (Aliarcobacter butzleri (strain RM4018) (Arcobacter butzleri)).